We begin with the raw amino-acid sequence, 1199 residues long: Chromatin structure-remodeling complex subunit snf21 (1199 aa).

In terms of domain architecture, HSA spans Gln256 to Glu328. A Helicase ATP-binding domain is found at Ile429–Arg594. An ATP-binding site is contributed by Asp442–Thr449. The DEGH box motif lies at Asp544–His547. Residues Leu740–Leu903 enclose the Helicase C-terminal domain. Positions Met1017 to Thr1059 are disordered. Positions Glu1061 to Leu1171 constitute a Bromo domain.

This sequence belongs to the SNF2/RAD54 helicase family. As to quaternary structure, component of the RSC complex composed of at least arp9, arp42, rsc1, rsc4, rsc7, rsc9, rsc58, sfh1, snf21, ssr1, ssr2, ssr3 and ssr4. The complex interacts with histone and histone variant components of centromeric chromatin.

The protein resides in the nucleus. Functionally, helicase. Component of the chromatin structure remodeling complex (RSC), which is involved in transcription regulation and nucleosome positioning. Controls particularly membrane and organelle development genes. This is Chromatin structure-remodeling complex subunit snf21 (snf21) from Schizosaccharomyces pombe (strain 972 / ATCC 24843) (Fission yeast).